The following is a 351-amino-acid chain: Photosystem II D2 protein (351 aa).

A helical transmembrane segment spans residues 39 to 59 (TAYLSIGGWLTGTTFVTSWYT). A chlorophyll a-binding site is contributed by H116. A helical membrane pass occupies residues 123–139 (GFMLRQFEIARLVGIRP). Q128 and N141 together coordinate pheophytin a. A helical membrane pass occupies residues 151–164 (VFVSVFLMYPLGQS). H196 provides a ligand contact to chlorophyll a. Residues 206 to 226 (GALLCAIHGATVENTLFEDGE) traverse the membrane as a helical segment. Positions 213 and 260 each coordinate a plastoquinone. H213 serves as a coordination point for Fe cation. H267 serves as a coordination point for Fe cation. Residues 277–293 (GLWTSAIGIIGLALNLR) traverse the membrane as a helical segment.

This sequence belongs to the reaction center PufL/M/PsbA/D family. As to quaternary structure, PSII is composed of 1 copy each of membrane proteins PsbA, PsbB, PsbC, PsbD, PsbE, PsbF, PsbH, PsbI, PsbJ, PsbK, PsbL, PsbM, PsbT, PsbX, PsbY, PsbZ, Psb30/Ycf12, peripheral proteins PsbO, CyanoQ (PsbQ), PsbU, PsbV and a large number of cofactors. It forms dimeric complexes. It depends on The D1/D2 heterodimer binds P680, chlorophylls that are the primary electron donor of PSII, and subsequent electron acceptors. It shares a non-heme iron and each subunit binds pheophytin, quinone, additional chlorophylls, carotenoids and lipids. There is also a Cl(-1) ion associated with D1 and D2, which is required for oxygen evolution. The PSII complex binds additional chlorophylls, carotenoids and specific lipids. as a cofactor.

It localises to the cellular thylakoid membrane. The catalysed reaction is 2 a plastoquinone + 4 hnu + 2 H2O = 2 a plastoquinol + O2. In terms of biological role, photosystem II (PSII) is a light-driven water:plastoquinone oxidoreductase that uses light energy to abstract electrons from H(2)O, generating O(2) and a proton gradient subsequently used for ATP formation. It consists of a core antenna complex that captures photons, and an electron transfer chain that converts photonic excitation into a charge separation. The D1/D2 (PsbA/PsbD) reaction center heterodimer binds P680, the primary electron donor of PSII as well as several subsequent electron acceptors. D2 is needed for assembly of a stable PSII complex. This chain is Photosystem II D2 protein, found in Synechococcus sp. (strain CC9311).